We begin with the raw amino-acid sequence, 1005 residues long: Ephrin type-A receptor 8 (1005 aa).

Positions 1–27 (MAPARGRLPPALWVVTAAAAAATCVSA) are cleaved as a signal peptide. The Extracellular segment spans residues 28–542 (ARGEVNLLDT…KPRPRYDTRT (515 aa)). The 179-residue stretch at 31-209 (EVNLLDTSTI…YYKKCPAMVR (179 aa)) folds into the Eph LBD domain. Fibronectin type-III domains lie at 328 to 438 (PPSA…TNQA) and 439 to 534 (APSQ…TGKP). N-linked (GlcNAc...) asparagine glycans are attached at residues N340, N407, and N432. A helical transmembrane segment spans residues 543–563 (IVWICLTLITGLVVLLLLLIC). Residues 564–570 (KKRHCGY) are mediates interaction with ANKS1A and ANKS1B. The Cytoplasmic segment spans residues 564–1005 (KKRHCGYSKA…TSTQGPRRHL (442 aa)). A mediates interaction with PIK3CG and required for endocytosis region spans residues 589–644 (APPPVFLPLHHPPGKLPEPQFYAEPHTYEEPGRAGRSFTREIEASRIHIEKIIGSG). Phosphotyrosine; by autocatalysis is present on Y616. Residues 635–896 (IHIEKIIGSG…QIVSVLDALI (262 aa)) form the Protein kinase domain. Residues 641–649 (IGSGDSGEV) and K667 contribute to the ATP site. D760 acts as the Proton acceptor in catalysis. Phosphotyrosine; by autocatalysis is present on Y839. The 65-residue stretch at 930-994 (GGGLTVGDWL…LGSIQTMRAQ (65 aa)) folds into the SAM domain. Residues 1003 to 1005 (RHL) carry the PDZ-binding motif.

Belongs to the protein kinase superfamily. Tyr protein kinase family. Ephrin receptor subfamily. Heterotetramer upon binding of the ligand. The heterotetramer is composed of an ephrin dimer and a receptor dimer. Oligomerization is probably required to induce biological responses. May also form heterodimers with other ephrin receptors. Interacts with FYN; possible downstream effector of EPHA8 in regulation of cell adhesion. Interacts with PIK3CG; regulates integrin-mediated cell adhesion to substrate. Interacts with TIAM1; regulates clathrin-mediated endocytosis of EPHA8. Interacts with ANKS1A and ANKS1B; EPHA8 kinase activity-independent but stimulated by EPHA8 ubiquitination. In terms of processing, phosphorylated. Phosphorylation is stimulated upon binding of its ligands including EFNA2, EFNA3 and EFNA5. Autophosphorylation on Tyr-616 is critical for association with FYN. Autophosphorylation on Tyr-839 modulates tyrosine kinase activity. Post-translationally, ubiquitinated. Ubiquitination by CBL regulates the receptor stability and activity through proteasomal degradation. ANKS1A prevents ubiquitination and degradation.

Its subcellular location is the cell membrane. The protein localises to the cell projection. It localises to the early endosome membrane. It carries out the reaction L-tyrosyl-[protein] + ATP = O-phospho-L-tyrosyl-[protein] + ADP + H(+). Functionally, receptor tyrosine kinase which binds promiscuously GPI-anchored ephrin-A family ligands residing on adjacent cells, leading to contact-dependent bidirectional signaling into neighboring cells. The signaling pathway downstream of the receptor is referred to as forward signaling while the signaling pathway downstream of the ephrin ligand is referred to as reverse signaling. The GPI-anchored ephrin-A EFNA2, EFNA3, and EFNA5 are able to activate EPHA8 through phosphorylation. With EFNA5 may regulate integrin-mediated cell adhesion and migration on fibronectin substrate but also neurite outgrowth. During development of the nervous system also plays a role in axon guidance. Downstream effectors of the EPHA8 signaling pathway include FYN which promotes cell adhesion upon activation by EPHA8 and the MAP kinases in the stimulation of neurite outgrowth. The chain is Ephrin type-A receptor 8 (EPHA8) from Homo sapiens (Human).